The following is a 161-amino-acid chain: Endoribonuclease YbeY (161 aa).

H120, H124, and D130 together coordinate Zn(2+).

The protein belongs to the endoribonuclease YbeY family. The cofactor is Zn(2+).

The protein localises to the cytoplasm. Its function is as follows. Single strand-specific metallo-endoribonuclease involved in late-stage 70S ribosome quality control and in maturation of the 3' terminus of the 16S rRNA. This chain is Endoribonuclease YbeY, found in Chlamydia trachomatis serovar A (strain ATCC VR-571B / DSM 19440 / HAR-13).